Here is a 126-residue protein sequence, read N- to C-terminus: 13 kDa ribonucleoprotein-associated protein (126 aa).

The protein belongs to the eukaryotic ribosomal protein eL8 family. Binds to the C'/D and B/C motifs in U3 snoRNA. Component of the U4/U6-U5 tri-snRNP complex composed of the U4, U6 and U5 snRNAs and at least PRP3, PRP4, PRP6, PRP8, PRP18, PRP31, PRP38, SNU13, SNU23, SNU66, SNU114, SPP381, SMB1, SMD1, SMD2, SMD3, SMX2, SMX3, LSM2, LSM3, LSM4, LSM5, LSM6, LSM7, LSM8, BRR2 and DIB1. Binds to the 5'-stem-loop of U4 snRNA. Component of the ribosomal small subunit (SSU) processome composed of at least 40 protein subunits and snoRNA U3.

The protein localises to the nucleus. Its subcellular location is the nucleolus. In terms of biological role, common component of the spliceosome and rRNA processing machinery. In association with the spliceosomal U4/U6.U5 tri-snRNP particle, required for splicing of pre-mRNA. In association with box C/D snoRNPs, required for processing of pre-ribosomal RNA (rRNA) and site-specific 2'-O-methylation of substrate RNAs. Essential for the accumulation and stability of U4 snRNA, U6 snRNA, and box C/D snoRNAs. The protein is 13 kDa ribonucleoprotein-associated protein (SNU13) of Saccharomyces cerevisiae (strain ATCC 204508 / S288c) (Baker's yeast).